The following is a 46-amino-acid chain: Viscotoxin-1-PS (46 aa).

Cystine bridges form between Cys-3/Cys-40, Cys-4/Cys-32, and Cys-16/Cys-26.

It belongs to the plant thionin (TC 1.C.44) family.

The protein resides in the secreted. Thionins are small plant proteins which are toxic to animal cells. They seem to exert their toxic effect at the level of the cell membrane. Their precise function is not known. The polypeptide is Viscotoxin-1-PS (THI2.4) (Viscum album (European mistletoe)).